The chain runs to 233 residues: 3-dehydroquinate dehydratase (233 aa).

Residues 34–36 (ELR) and arginine 64 each bind 3-dehydroquinate. The active-site Proton donor/acceptor is histidine 118. Catalysis depends on lysine 145, which acts as the Schiff-base intermediate with substrate. Positions 185, 205, and 209 each coordinate 3-dehydroquinate.

This sequence belongs to the type-I 3-dehydroquinase family. In terms of assembly, homodimer.

It catalyses the reaction 3-dehydroquinate = 3-dehydroshikimate + H2O. It functions in the pathway metabolic intermediate biosynthesis; chorismate biosynthesis; chorismate from D-erythrose 4-phosphate and phosphoenolpyruvate: step 3/7. Its function is as follows. Involved in the third step of the chorismate pathway, which leads to the biosynthesis of aromatic amino acids. Catalyzes the cis-dehydration of 3-dehydroquinate (DHQ) and introduces the first double bond of the aromatic ring to yield 3-dehydroshikimate. The chain is 3-dehydroquinate dehydratase from Coxiella burnetii (strain CbuG_Q212) (Coxiella burnetii (strain Q212)).